The chain runs to 470 residues: SHUGOSHIN 2 (470 aa).

Residues 72–113 (IQKLRINLRSVQEKNLQLAQANSQMLAELNTNRDRLKDLQHE) adopt a coiled-coil conformation. 2 stretches are compositionally biased toward basic and acidic residues: residues 131-143 (VLPR…KDKV) and 150-162 (GDCK…DIKH). Disordered regions lie at residues 131 to 176 (VLPR…IKSS) and 358 to 470 (ESAG…RRKC). The span at 163 to 172 (KDTKRKRTTR) shows a compositional bias: basic residues. Basic and acidic residues predominate over residues 370–381 (SESRHETKEITR). Over residues 382–392 (KRSFSTRRQST) the composition is skewed to basic residues. Composition is skewed to basic and acidic residues over residues 396 to 406 (SQTDEAIKEIA), 423 to 438 (TESK…EGMT), and 449 to 462 (HAAE…EVSL).

Belongs to the shugoshin family.

Functionally, dispensable for both meiotic and mitotic cell cycle progression. Required with SGO1 for full protection of centromeric cohesion during anaphase I. Required to prevent precocious release of pericentromeric cohesins during meiosis. Acts redundantly to SGO1. The sequence is that of SHUGOSHIN 2 from Arabidopsis thaliana (Mouse-ear cress).